Here is a 276-residue protein sequence, read N- to C-terminus: Protease HtpX homolog (276 aa).

Residues 14 to 34 (IVLFALIGQALGGTGGMLLAF) form a helical membrane-spanning segment. His130 contacts Zn(2+). Glu131 is an active-site residue. Residue His134 participates in Zn(2+) binding. Transmembrane regions (helical) follow at residues 145-165 (VAATLAGAITMLSRFALFFGG) and 171-191 (LVSLLMMILAPMAAMLIQSAI). Glu196 provides a ligand contact to Zn(2+).

This sequence belongs to the peptidase M48B family. The cofactor is Zn(2+).

Its subcellular location is the cell inner membrane. In Salinibacter ruber (strain DSM 13855 / M31), this protein is Protease HtpX homolog.